The chain runs to 152 residues: 3-hydroxyacyl-[acyl-carrier-protein] dehydratase FabZ (152 aa).

The active site involves His58.

The protein belongs to the thioester dehydratase family. FabZ subfamily.

It is found in the cytoplasm. It catalyses the reaction a (3R)-hydroxyacyl-[ACP] = a (2E)-enoyl-[ACP] + H2O. In terms of biological role, involved in unsaturated fatty acids biosynthesis. Catalyzes the dehydration of short chain beta-hydroxyacyl-ACPs and long chain saturated and unsaturated beta-hydroxyacyl-ACPs. The protein is 3-hydroxyacyl-[acyl-carrier-protein] dehydratase FabZ of Prochlorococcus marinus (strain MIT 9301).